The primary structure comprises 610 residues: UvrABC system protein C (610 aa).

The GIY-YIG domain occupies 16–94; the sequence is SQPGVYRMYD…IKLYQPRYNV (79 aa). The region spanning 204–239 is the UVR domain; it reads DQVINQLVSRMEQASQNLAFEEAARLRDQIQAVRRV.

This sequence belongs to the UvrC family. Interacts with UvrB in an incision complex.

The protein resides in the cytoplasm. Its function is as follows. The UvrABC repair system catalyzes the recognition and processing of DNA lesions. UvrC both incises the 5' and 3' sides of the lesion. The N-terminal half is responsible for the 3' incision and the C-terminal half is responsible for the 5' incision. This chain is UvrABC system protein C, found in Cronobacter sakazakii (strain ATCC BAA-894) (Enterobacter sakazakii).